The chain runs to 415 residues: Mechanosensing system component YbdG (415 aa).

Residues 1–24 (MQDLISQVEDLAGIEIDHTTSMVM) are Periplasmic-facing. The helical transmembrane segment at 25–45 (IFGIIFLTAVVVHIILHWVVL) threads the bilayer. The Cytoplasmic segment spans residues 46-67 (RTFEKRAIASSRLWLQIITQNK). A helical transmembrane segment spans residues 68 to 88 (LFHRLAFTLQGIIVNIQAVFW). At 89-104 (LQKGTEAADILTTCAQ) the chain is on the periplasmic side. Residues 105–125 (LWIMMYALLSVFSLLDVILNL) form a helical membrane-spanning segment. At 126 to 148 (AQKFPAASQLPLKGIFQGIKLIG) the chain is on the cytoplasmic side. The chain crosses the membrane as a helical span at residues 149–169 (AILVGILMISLLIGQSPAILI). Over 170 to 173 (SGLG) the chain is Periplasmic. The helical transmembrane segment at 174 to 194 (AMAAVLMLVFKDPILGLVAGI) threads the bilayer. The Cytoplasmic segment spans residues 195-415 (QLSANDMLKL…IRSLAGAFKQ (221 aa)).

It belongs to the MscS (TC 1.A.23) family. Homoheptamer.

It is found in the cell inner membrane. Functionally, functions as a component of a mechanosensing system that transmits signals triggered by external osmotic changes to intracellular factors. The chain is Mechanosensing system component YbdG (ybdG) from Shigella flexneri.